The sequence spans 365 residues: Heme A synthase (365 aa).

Transmembrane regions (helical) follow at residues 23–43 (LLRIWLRVVLFTLFCLVLVGG), 109–129 (LLARTIGLVFALPLAFFWLTG), 137–157 (LPLVGLLALGGFQGFVGWWMV), 172–192 (LATHLTIACLIFAGCMWILRG), and 208–228 (GFAALLTVLCLFQIYLGALVA). Position 272 (H272) interacts with heme. The next 3 helical transmembrane spans lie at 274–294 (LGAYTLFAATLWHMVSMARAL), 303–323 (AVLFFVLISVQAGLGITTLLM), and 327–347 (IHVALAHQGMALILLGFSVAH). Residue H333 coordinates heme.

The protein belongs to the COX15/CtaA family. Type 2 subfamily. As to quaternary structure, interacts with CtaB. Requires heme b as cofactor.

It is found in the cell membrane. The catalysed reaction is Fe(II)-heme o + 2 A + H2O = Fe(II)-heme a + 2 AH2. The protein operates within porphyrin-containing compound metabolism; heme A biosynthesis; heme A from heme O: step 1/1. Catalyzes the conversion of heme O to heme A by two successive hydroxylations of the methyl group at C8. The first hydroxylation forms heme I, the second hydroxylation results in an unstable dihydroxymethyl group, which spontaneously dehydrates, resulting in the formyl group of heme A. The sequence is that of Heme A synthase from Agrobacterium fabrum (strain C58 / ATCC 33970) (Agrobacterium tumefaciens (strain C58)).